Consider the following 376-residue polypeptide: General transcription factor IIH subunit 2 (376 aa).

The VWFA domain maps to 64–206 (HVMIVIDCSR…NIRCSAIGLS (143 aa)). Residues 286-303 (CTQCGARHCSIPAECPVC) form a C4-type zinc finger.

Belongs to the GTF2H2 family. As to quaternary structure, component of the 7-subunit TFIIH core complex composed of xpb-1, xpd-1, gtf-2H1, gtf-2H2C, gtf-2H3, Y73F8A.24 and gtf-2H5, which is active in NER. The core complex associates with the 3-subunit CDK-activating kinase (CAK) module composed of cyh-1, cdk-7 and mnat-1 to form the 10-subunit holoenzyme (holo-TFIIH) active in transcription.

Its subcellular location is the nucleus. Component of the general transcription and DNA repair factor IIH (TFIIH) core complex, which is involved in general and transcription-coupled nucleotide excision repair (NER) of damaged DNA and, when complexed to CAK, in RNA transcription by RNA polymerase II. In NER, TFIIH acts by opening DNA around the lesion to allow the excision of the damaged oligonucleotide and its replacement by a new DNA fragment. In transcription, TFIIH has an essential role in transcription initiation. When the pre-initiation complex (PIC) has been established, TFIIH is required for promoter opening and promoter escape. Phosphorylation of the C-terminal tail (CTD) of the largest subunit of RNA polymerase II by the kinase module CAK controls the initiation of transcription. The chain is General transcription factor IIH subunit 2 from Caenorhabditis elegans.